A 277-amino-acid polypeptide reads, in one-letter code: PHD finger protein ALFIN-LIKE 9 (277 aa).

2 disordered regions span residues K138–H206 and P255–S277. Low complexity predominate over residues S145–T160. Residues E208–G260 form a PHD-type zinc finger. Residues G259–N270 are compositionally biased toward gly residues.

Belongs to the Alfin family. In terms of assembly, interacts with H3K4me3 and to a lesser extent with H3K4me2.

It localises to the nucleus. In terms of biological role, histone-binding component that specifically recognizes H3 tails trimethylated on 'Lys-4' (H3K4me3), which mark transcription start sites of virtually all active genes. The polypeptide is PHD finger protein ALFIN-LIKE 9 (Oryza sativa subsp. indica (Rice)).